The sequence spans 472 residues: Cysteine--tRNA ligase (472 aa).

Zn(2+) is bound at residue Cys-28. The short motif at 30 to 40 is the 'HIGH' region element; sequence PTVYDYTHIGH. The Zn(2+) site is built by Cys-207, His-232, and Glu-236. Positions 264 to 268 match the 'KMSKS' region motif; sequence KMSKS. Lys-267 contributes to the ATP binding site.

It belongs to the class-I aminoacyl-tRNA synthetase family. Requires Zn(2+) as cofactor.

The protein resides in the cytoplasm. The enzyme catalyses tRNA(Cys) + L-cysteine + ATP = L-cysteinyl-tRNA(Cys) + AMP + diphosphate. This is Cysteine--tRNA ligase (cysS) from Aeropyrum pernix (strain ATCC 700893 / DSM 11879 / JCM 9820 / NBRC 100138 / K1).